A 220-amino-acid polypeptide reads, in one-letter code: GILT-like protein CBG03282 (220 aa).

Residues 1–22 (MTIIRTLFVYYSFLFILVLCSS) form the signal peptide. N-linked (GlcNAc...) asparagine glycosylation occurs at Asn131.

Belongs to the GILT family.

Its subcellular location is the secreted. This chain is GILT-like protein CBG03282, found in Caenorhabditis briggsae.